The following is a 487-amino-acid chain: uncharacterized protein (487 aa).

Disordered regions lie at residues 35–153, 237–345, and 358–395; these read VSRK…SGDQ, NTTK…AKAL, and QKRKREEIVRKKEERRHAPVSEKKEVPTTVSTNTSSAA. The span at 54 to 96 shows a compositional bias: acidic residues; that stretch reads FDQEDILDTVPEQTDENEDEAGDDELESEKEELDYDEEEDDED. The segment covering 97-132 has biased composition (basic and acidic residues); that stretch reads RRERTSRYTSEKKGSRKDSVEGDENKKENGQDETKR. The segment covering 241–253 has biased composition (basic residues); the sequence is SKSRGRDTRKRRS. Low complexity predominate over residues 254 to 264; sequence SSYSSTSSSSD. Composition is skewed to basic and acidic residues over residues 273–338 and 358–383; these read SRSD…KHSA and QKRKREEIVRKKEERRHAPVSEKKEV. Residues 385–395 show a composition bias toward low complexity; that stretch reads TTVSTNTSSAA.

This is an uncharacterized protein from Caenorhabditis elegans.